Consider the following 182-residue polypeptide: Large ribosomal subunit protein bL25 (182 aa).

The protein belongs to the bacterial ribosomal protein bL25 family. CTC subfamily. In terms of assembly, part of the 50S ribosomal subunit; part of the 5S rRNA/L5/L18/L25 subcomplex. Contacts the 5S rRNA. Binds to the 5S rRNA independently of L5 and L18.

In terms of biological role, this is one of the proteins that binds to the 5S RNA in the ribosome where it forms part of the central protuberance. The polypeptide is Large ribosomal subunit protein bL25 (Borrelia turicatae (strain 91E135)).